We begin with the raw amino-acid sequence, 560 residues long: Membrane protein insertase YidC (560 aa).

The next 6 membrane-spanning stretches (helical) occupy residues 5–25 (IINLIAAVVLSLSIIFGWQYF), 334–354 (AIDFGWFYIITKPVFYAMNFF), 357–377 (YVGNFGISILIVTVIIKLLMF), 431–451 (LPILVQIPVFFSIYKVLYVTI), 476–496 (LFGLLPFAPPSFLMIGAWPIL), and 522–542 (FMPLIFLFMFSSFPVGLLIYW).

It belongs to the OXA1/ALB3/YidC family. Type 1 subfamily. As to quaternary structure, interacts with the Sec translocase complex via SecD. Specifically interacts with transmembrane segments of nascent integral membrane proteins during membrane integration.

The protein resides in the cell inner membrane. In terms of biological role, required for the insertion and/or proper folding and/or complex formation of integral membrane proteins into the membrane. Involved in integration of membrane proteins that insert both dependently and independently of the Sec translocase complex, as well as at least some lipoproteins. Aids folding of multispanning membrane proteins. This Rickettsia prowazekii (strain Madrid E) protein is Membrane protein insertase YidC.